We begin with the raw amino-acid sequence, 637 residues long: Probable potassium transport system protein Kup (637 aa).

12 consecutive transmembrane segments (helical) span residues 24 to 44, 64 to 84, 113 to 133, 151 to 171, 182 to 202, 225 to 245, 261 to 281, 290 to 310, 351 to 371, 381 to 401, 409 to 429, and 433 to 453; these read LAIAAIGVVFGDIGTSPLYAL, VISLLFWAIILVVGIKYLLFV, AGALMALGIFGACMFYGDAVI, PHLSHLVLPITIVILIALFWI, LFGPIMVVWFVVIAALGVYHI, LLQAYVVLGSVVLVLTGAEAL, AYGLVMPSLVLNYFGQGALLI, PFFLLAPEWALLPLVVLSTVA, IYVPVVNWLLLFVILCIVIGF, YGIAVTATMVITTVLACVVMV, LLVGAIIAIFLAIDLGFFGAN, and VAQGGWLPLGIGALLFFLLMT.

Belongs to the HAK/KUP transporter (TC 2.A.72) family.

It is found in the cell inner membrane. It carries out the reaction K(+)(in) + H(+)(in) = K(+)(out) + H(+)(out). In terms of biological role, transport of potassium into the cell. Likely operates as a K(+):H(+) symporter. The protein is Probable potassium transport system protein Kup of Burkholderia ambifaria (strain MC40-6).